Consider the following 326-residue polypeptide: tRNA-modifying protein YgfZ (326 aa).

2 residues coordinate folate: tryptophan 27 and tryptophan 189.

Belongs to the tRNA-modifying YgfZ family.

It localises to the cytoplasm. Folate-binding protein involved in regulating the level of ATP-DnaA and in the modification of some tRNAs. It is probably a key factor in regulatory networks that act via tRNA modification, such as initiation of chromosomal replication. In Escherichia coli O17:K52:H18 (strain UMN026 / ExPEC), this protein is tRNA-modifying protein YgfZ.